A 117-amino-acid chain; its full sequence is Small ribosomal subunit protein bS6 (117 aa).

This sequence belongs to the bacterial ribosomal protein bS6 family.

Binds together with bS18 to 16S ribosomal RNA. The sequence is that of Small ribosomal subunit protein bS6 from Roseobacter denitrificans (strain ATCC 33942 / OCh 114) (Erythrobacter sp. (strain OCh 114)).